The following is a 443-amino-acid chain: Zinc finger protein 713 (443 aa).

Residues 1-10 (MPSQNAVFSQ) show a composition bias toward polar residues. 2 disordered regions span residues 1-23 (MPSQ…NDGS) and 99-118 (DTHP…TSQN). The region spanning 32–102 (LTFQDVAVDF…ERDSLLDTHP (71 aa)) is the KRAB domain. Residues 99 to 112 (DTHPDGENRPEIKK) are compositionally biased toward basic and acidic residues. The segment at 255–280 (HTAEKPSECGKAFSHTSSLSQPQMLL) adopts a C2H2-type 1; degenerate zinc-finger fold. 5 C2H2-type zinc fingers span residues 286 to 308 (YKCD…QRIH), 314 to 336 (FICN…LRIH), 342 to 364 (YKCN…HRLH), 370 to 392 (YECG…ERTH), and 398 to 420 (YKCN…RKIH).

The protein belongs to the krueppel C2H2-type zinc-finger protein family. As to expression, expressed in fetal and adult brain.

The protein localises to the nucleus. Functionally, may be involved in transcriptional regulation. The polypeptide is Zinc finger protein 713 (Homo sapiens (Human)).